We begin with the raw amino-acid sequence, 782 residues long: Coiled-coil alpha-helical rod protein 1 (782 aa).

Basic and acidic residues-rich tracts occupy residues 62–74 (ERDV…EPGR) and 208–218 (ETRRAGEAKEL). Disordered regions lie at residues 62–82 (ERDV…WGLE) and 182–218 (LTQA…AKEL). 3 coiled-coil regions span residues 82 to 314 (EGSQ…ELTR), 344 to 437 (LMVQ…NAVS), and 498 to 691 (VADV…QQEG).

The protein localises to the cytoplasm. It is found in the nucleus. In terms of biological role, may be a regulator of keratinocyte proliferation or differentiation. The polypeptide is Coiled-coil alpha-helical rod protein 1 (CCHCR1) (Pan paniscus (Pygmy chimpanzee)).